The primary structure comprises 525 residues: Matrix extracellular phosphoglycoprotein (525 aa).

Residues 1-17 (MRVFCVGLLLFSVTWAA) form the signal peptide. 3 disordered regions span residues 24–95 (TEKT…NRQR), 187–216 (AKAHSKDKKKPQRDSQAQKSPVKSKSTHRI), and 237–525 (EGSG…SDGD). Composition is skewed to basic and acidic residues over residues 25–46 (EKTKQSCVEEQRQEEKNKDNIG) and 64–73 (IVQERKKDLS). Composition is skewed to polar residues over residues 75 to 95 (SEASENKGSSKSQNYFTNRQR) and 200 to 210 (DSQAQKSPVKS). The segment at 242–264 (TDLQERGDNDISPFSGDGQPFKD) is dentonin. The Cell attachment site motif lies at 247–249 (RGD). Serine 256 is a glycosylation site (O-linked (Xyl...) (chondroitin sulfate) serine). Composition is skewed to basic and acidic residues over residues 292-312 (ESTHLDTKKPGYNEIPEREEN) and 319-328 (TRDETAKEAD). Asparagine 477 and asparagine 478 each carry an N-linked (GlcNAc...) asparagine glycan. The segment at 507–525 (RDDSSESSDSGSSSESDGD) is ASARM motif; interaction with PHEX. Residues 513–525 (SSDSGSSSESDGD) are compositionally biased toward low complexity.

It belongs to the PF07175/osteoregulin family. In terms of assembly, interacts (via the ASARM motif) with PHEX; the interaction is zinc-dependent. Phosphorylated on serine residues in the ASARM motif (in vitro) by FAM20C; the phosphorylation is important for the inhibition of bone mineralization. Post-translationally, cleaved by CTSB/cathepsin B; the cleavage is blocked by metalloprotease PHEX. As to expression, detected in urine (at protein level). Expressed by osteoblasts. Expressed by stem cells in dental pulp. Expressed by mesenchymal cells in dental papilla and dental pulp. Expressed in teeth, specifically in decidious dentin. Expressed in ondotoblasts. Expressed in salivary glands. Secreted from oncogenic hypophosphatemic tumors.

The protein resides in the secreted. Its subcellular location is the extracellular space. It localises to the extracellular matrix. Its function is as follows. Promotes renal phosphate excretion and inhibits intestinal phosphate absorption. Promotes bone mineralization by osteoblasts and cartilage mineralization by chondrocytes. Regulates the mineralization of the extracellular matrix of the craniofacial complex, such as teeth, bone and cartilage. Promotes dental pulp stem cell proliferation and differentiation. This is Matrix extracellular phosphoglycoprotein (MEPE) from Homo sapiens (Human).